Here is a 489-residue protein sequence, read N- to C-terminus: Protein nucleotidyltransferase YdiU (489 aa).

ATP contacts are provided by G88, G90, R91, K111, D123, G124, R174, and R181. Catalysis depends on D250, which acts as the Proton acceptor. Residues N251 and D260 each coordinate Mg(2+). Residue D260 participates in ATP binding.

It belongs to the SELO family. Requires Mg(2+) as cofactor. It depends on Mn(2+) as a cofactor.

The enzyme catalyses L-seryl-[protein] + ATP = 3-O-(5'-adenylyl)-L-seryl-[protein] + diphosphate. It carries out the reaction L-threonyl-[protein] + ATP = 3-O-(5'-adenylyl)-L-threonyl-[protein] + diphosphate. The catalysed reaction is L-tyrosyl-[protein] + ATP = O-(5'-adenylyl)-L-tyrosyl-[protein] + diphosphate. It catalyses the reaction L-histidyl-[protein] + UTP = N(tele)-(5'-uridylyl)-L-histidyl-[protein] + diphosphate. The enzyme catalyses L-seryl-[protein] + UTP = O-(5'-uridylyl)-L-seryl-[protein] + diphosphate. It carries out the reaction L-tyrosyl-[protein] + UTP = O-(5'-uridylyl)-L-tyrosyl-[protein] + diphosphate. Nucleotidyltransferase involved in the post-translational modification of proteins. It can catalyze the addition of adenosine monophosphate (AMP) or uridine monophosphate (UMP) to a protein, resulting in modifications known as AMPylation and UMPylation. This is Protein nucleotidyltransferase YdiU from Vibrio parahaemolyticus serotype O3:K6 (strain RIMD 2210633).